Consider the following 206-residue polypeptide: 2-phospho-L-lactate guanylyltransferase (206 aa).

Belongs to the CofC family. In terms of assembly, homodimer.

The catalysed reaction is (2S)-2-phospholactate + GTP + H(+) = (2S)-lactyl-2-diphospho-5'-guanosine + diphosphate. Its pathway is cofactor biosynthesis; coenzyme F420 biosynthesis. Its function is as follows. Guanylyltransferase that catalyzes the activation of (2S)-2-phospholactate (2-PL) as (2S)-lactyl-2-diphospho-5'-guanosine, via the condensation of 2-PL with GTP. It is involved in the biosynthesis of coenzyme F420, a hydride carrier cofactor. The sequence is that of 2-phospho-L-lactate guanylyltransferase from Haloferax volcanii (strain ATCC 29605 / DSM 3757 / JCM 8879 / NBRC 14742 / NCIMB 2012 / VKM B-1768 / DS2) (Halobacterium volcanii).